The sequence spans 142 residues: Large ribosomal subunit protein uL11 (142 aa).

Belongs to the universal ribosomal protein uL11 family. As to quaternary structure, part of the ribosomal stalk of the 50S ribosomal subunit. Interacts with L10 and the large rRNA to form the base of the stalk. L10 forms an elongated spine to which L12 dimers bind in a sequential fashion forming a multimeric L10(L12)X complex. In terms of processing, one or more lysine residues are methylated.

Its function is as follows. Forms part of the ribosomal stalk which helps the ribosome interact with GTP-bound translation factors. This Pseudoalteromonas atlantica (strain T6c / ATCC BAA-1087) protein is Large ribosomal subunit protein uL11.